The following is a 129-amino-acid chain: Phosphoribosyl-AMP cyclohydrolase (129 aa).

Aspartate 76 provides a ligand contact to Mg(2+). Cysteine 77 is a Zn(2+) binding site. Residues aspartate 78 and aspartate 80 each contribute to the Mg(2+) site. The Zn(2+) site is built by cysteine 97 and cysteine 104.

Belongs to the PRA-CH family. Homodimer. The cofactor is Mg(2+). It depends on Zn(2+) as a cofactor.

The protein resides in the cytoplasm. The enzyme catalyses 1-(5-phospho-beta-D-ribosyl)-5'-AMP + H2O = 1-(5-phospho-beta-D-ribosyl)-5-[(5-phospho-beta-D-ribosylamino)methylideneamino]imidazole-4-carboxamide. It functions in the pathway amino-acid biosynthesis; L-histidine biosynthesis; L-histidine from 5-phospho-alpha-D-ribose 1-diphosphate: step 3/9. Its function is as follows. Catalyzes the hydrolysis of the adenine ring of phosphoribosyl-AMP. This Polaromonas sp. (strain JS666 / ATCC BAA-500) protein is Phosphoribosyl-AMP cyclohydrolase.